The following is a 369-amino-acid chain: Hsc70-interacting protein (369 aa).

Residues 38–97 (MGGKVPPATQKAKSEENTKEEKPDSKKVEEDLKADEPSSEESDLEIDKEGVIEPDTDAPQ) form a disordered region. Residues 49–73 (AKSEENTKEEKPDSKKVEEDLKADE) show a composition bias toward basic and acidic residues. 3 TPR repeats span residues 114-147 (ANDKKVAAIEALNDGELQKAIDLFTDAIKLNPRL), 148-181 (AILYAKRASVFVKLQKPNAAIRDCDRAIEINPDS), and 182-215 (AQPYKWRGKAHRLLGHWEEAAHDLALACKLDYDE). The segment covering 256–272 (KAREEHERAQREEEARR) has biased composition (basic and acidic residues). Residues 256–300 (KAREEHERAQREEEARRQSGAQYGSFPGGFPGGMPGNFPGGMPGM) form a disordered region. The segment covering 281 to 300 (FPGGFPGGMPGNFPGGMPGM) has biased composition (gly residues). Positions 319 to 358 (DPEVLAAMQDPEVMVAFQDVAQNPANMSKYQSNPKVMNLI) constitute an STI1 domain. Position 346 is a phosphoserine; by GRK5 (S346). An N6-acetyllysine mark is found at K353 and K360.

This sequence belongs to the FAM10 family. In terms of assembly, homotetramer. Interacts with HSC70 as well as DNAJ homologs and HSP90. Interacts (via the C-terminus 303- 319 AA) with GRK5.

Its subcellular location is the cytoplasm. One HIP oligomer binds the ATPase domains of at least two HSC70 molecules dependent on activation of the HSC70 ATPase by HSP40. Stabilizes the ADP state of HSC70 that has a high affinity for substrate protein. Through its own chaperone activity, it may contribute to the interaction of HSC70 with various target proteins. This chain is Hsc70-interacting protein (ST13), found in Homo sapiens (Human).